The following is a 1392-amino-acid chain: DNA-directed RNA polymerase subunit beta'' (1392 aa).

Zn(2+) contacts are provided by C224, C295, C302, and C305.

This sequence belongs to the RNA polymerase beta' chain family. RpoC2 subfamily. In plastids the minimal PEP RNA polymerase catalytic core is composed of four subunits: alpha, beta, beta', and beta''. When a (nuclear-encoded) sigma factor is associated with the core the holoenzyme is formed, which can initiate transcription. Zn(2+) is required as a cofactor.

Its subcellular location is the plastid. The protein localises to the chloroplast. It catalyses the reaction RNA(n) + a ribonucleoside 5'-triphosphate = RNA(n+1) + diphosphate. DNA-dependent RNA polymerase catalyzes the transcription of DNA into RNA using the four ribonucleoside triphosphates as substrates. The chain is DNA-directed RNA polymerase subunit beta'' from Solanum lycopersicum (Tomato).